A 234-amino-acid chain; its full sequence is Sugar fermentation stimulation protein homolog (234 aa).

The protein belongs to the SfsA family.

This Bartonella quintana (strain Toulouse) (Rochalimaea quintana) protein is Sugar fermentation stimulation protein homolog.